The chain runs to 215 residues: Large ribosomal subunit protein bL25 (215 aa).

Residues 190 to 215 (VLTDAEEETDETPEEPEAIRQKGDEE) form a disordered region. Residues 193–205 (DAEEETDETPEEP) are compositionally biased toward acidic residues. The span at 206 to 215 (EAIRQKGDEE) shows a compositional bias: basic and acidic residues.

This sequence belongs to the bacterial ribosomal protein bL25 family. CTC subfamily. In terms of assembly, part of the 50S ribosomal subunit; part of the 5S rRNA/L5/L18/L25 subcomplex. Contacts the 5S rRNA. Binds to the 5S rRNA independently of L5 and L18.

This is one of the proteins that binds to the 5S RNA in the ribosome where it forms part of the central protuberance. The sequence is that of Large ribosomal subunit protein bL25 from Maricaulis maris (strain MCS10) (Caulobacter maris).